Reading from the N-terminus, the 688-residue chain is PTS system glucoside-specific EIICBA component (688 aa).

A PTS EIIC type-1 domain is found at 3-427; that stretch reads KKLFGQLQRI…FKLKTPGRED (425 aa). Helical transmembrane passes span 12 to 32, 81 to 101, 137 to 157, 182 to 202, 223 to 243, 284 to 304, 315 to 335, 340 to 360, 364 to 384, and 395 to 415; these read IGKA…LLAF, LGLA…YLIM, LVLG…MGAL, FVPI…SFAW, LTTF…LHHI, AFTT…AFAI, VVGG…ITEP, FLFV…TSFL, LLGV…ILYG, and LVIP…DFAI. Residues 438-519 form the PTS EIIB type-1 domain; it reads AKLPFDVLDA…AKIMSGEITK (82 aa). Cys460 acts as the Phosphocysteine intermediate; for EIIB activity in catalysis. Positions 560-664 constitute a PTS EIIA type-1 domain; that stretch reads DQVFAGKMMG…SIVTPMIITN (105 aa). The Tele-phosphohistidine intermediate; for EIIA activity role is filled by His612.

Its subcellular location is the cell membrane. The phosphoenolpyruvate-dependent sugar phosphotransferase system (sugar PTS), a major carbohydrate active -transport system, catalyzes the phosphorylation of incoming sugar substrates concomitantly with their translocation across the cell membrane. This system is involved in alpha- and beta-glucoside transport. The protein is PTS system glucoside-specific EIICBA component (glcB) of Staphylococcus aureus (strain Mu3 / ATCC 700698).